We begin with the raw amino-acid sequence, 100 residues long: Small ribosomal subunit protein bS6 (100 aa).

Belongs to the bacterial ribosomal protein bS6 family.

Binds together with bS18 to 16S ribosomal RNA. The chain is Small ribosomal subunit protein bS6 from Enterococcus faecalis (strain ATCC 700802 / V583).